We begin with the raw amino-acid sequence, 67 residues long: Large ribosomal subunit protein bL28 (67 aa).

The protein belongs to the bacterial ribosomal protein bL28 family.

The polypeptide is Large ribosomal subunit protein bL28 (Nitratiruptor sp. (strain SB155-2)).